Here is a 192-residue protein sequence, read N- to C-terminus: uncharacterized protein (192 aa).

In terms of domain architecture, Nudix hydrolase spans 29–160 (HRQAAVLIPI…PLDIYRRGDS (132 aa)). Positions 67 to 89 (GAVDDTDASVIAAALREAEEEVA) match the Nudix box motif. Residues Glu-83 and Glu-87 each coordinate Mg(2+).

The protein belongs to the Nudix hydrolase family. PCD1 subfamily. The cofactor is Mn(2+). Mg(2+) is required as a cofactor.

In terms of biological role, probably mediates the hydrolysis of some nucleoside diphosphate derivatives. This is an uncharacterized protein from Escherichia coli (strain SMS-3-5 / SECEC).